The sequence spans 471 residues: MQIDVDPQEDPQNAPDVNYVVENPTLDLEQYAASYSGLMRIERLQFIADRCPPLRVEALKMALSFVQRTFNVDMYEEIHRKLSEATRELQNAPDAIPESGVEPPPLDTAWVEATRKKALLKLEKLDTDLKNYKGNSIKESIRRGHDDLGDHYLDCGDLSNALKCYSRARDYCTSAKHVINMCLNVIKVSVYLQNWSHVLSYVSKAESTPEIAEQRGERDSQTQAILTKLKCAAGLAELAARKYKQAAKCFLLASFDHCDFPELLSPSNVAVYGGLCALATFDRQELQRNVISSSSFKLFLELEPQVRDIIFKFYESKYASCLKMLDEMKDNLLLDMYLAPHVRTLYTQIRNRALIQYFSPYVSADMHKMAAAFNTTVAALEDELTQLILEGLINARIDSHSKILYARDVDQRSTTFEKSLLMGKEFQRRAKAMILRAAVLRNQIHVKSPPREGSQGELTPANSQSRMSTNM.

In terms of domain architecture, PCI spans 249 to 411; that stretch reads CFLLASFDHC…KILYARDVDQ (163 aa). Residues 445 to 471 form a disordered region; it reads HVKSPPREGSQGELTPANSQSRMSTNM. Residues Ser-448 and Ser-454 each carry the phosphoserine modification. Positions 456–471 are enriched in polar residues; sequence GELTPANSQSRMSTNM. Thr-459 bears the Phosphothreonine mark. Ser-463 is modified (phosphoserine).

It belongs to the CSN1 family. Component of the CSN complex, composed of COPS1/GPS1, COPS2, COPS3, COPS4, COPS5, COPS6, COPS7 (COPS7A or COPS7B), COPS8 and COPS9. In the complex, it probably interacts directly with COPS2, COPS3, COPS4 and COPS5. Interacts directly with inositol kinase ITPK1. Interacts with CAPN8. Interacts with USP48. Interacts with ASB4; this interaction negatively regulates GPS1. In terms of tissue distribution, expressed in the base region of the oxyntic and pyloric mucosae.

Its subcellular location is the cytoplasm. It localises to the nucleus. Essential component of the COP9 signalosome complex (CSN), a complex involved in various cellular and developmental processes. The CSN complex is an essential regulator of the ubiquitin (Ubl) conjugation pathway by mediating the deneddylation of the cullin subunits of SCF-type E3 ligase complexes, leading to decrease the Ubl ligase activity of SCF-type complexes such as SCF, CSA or DDB2. The complex is also involved in phosphorylation of p53/TP53, c-jun/JUN, IkappaBalpha/NFKBIA, ITPK1 and IRF8/ICSBP, possibly via its association with CK2 and PKD kinases. CSN-dependent phosphorylation of TP53 and JUN promotes and protects degradation by the Ubl system, respectively. Suppresses G-protein- and mitogen-activated protein kinase-mediated signal transduction. This is COP9 signalosome complex subunit 1 (Gps1) from Mus musculus (Mouse).